Reading from the N-terminus, the 352-residue chain is Ion-translocating oxidoreductase complex subunit D (352 aa).

The next 5 membrane-spanning stretches (helical) occupy residues 20 to 40 (IMLL…WFFG), 42 to 62 (GTLV…ALVL), 78 to 109 (ALLT…VIIA), 123 to 143 (PAMI…TSWL), and 148 to 168 (IAVN…GHTA). Thr-187 bears the FMN phosphoryl threonine mark. 5 helical membrane passes run 214 to 234 (ILAG…GVWL), 242 to 262 (WHIP…GWLF), 267 to 287 (LAAP…FFIL), 301 to 321 (LIFG…GGYP), and 322 to 342 (DGVA…DYYT).

The protein belongs to the NqrB/RnfD family. In terms of assembly, the complex is composed of six subunits: RsxA, RsxB, RsxC, RsxD, RsxE and RsxG. Requires FMN as cofactor.

It is found in the cell inner membrane. Functionally, part of a membrane-bound complex that couples electron transfer with translocation of ions across the membrane. Required to maintain the reduced state of SoxR. In Escherichia coli O6:H1 (strain CFT073 / ATCC 700928 / UPEC), this protein is Ion-translocating oxidoreductase complex subunit D.